Consider the following 445-residue polypeptide: Exodeoxyribonuclease 7 large subunit (445 aa).

This sequence belongs to the XseA family. In terms of assembly, heterooligomer composed of large and small subunits.

The protein resides in the cytoplasm. It catalyses the reaction Exonucleolytic cleavage in either 5'- to 3'- or 3'- to 5'-direction to yield nucleoside 5'-phosphates.. In terms of biological role, bidirectionally degrades single-stranded DNA into large acid-insoluble oligonucleotides, which are then degraded further into small acid-soluble oligonucleotides. This Staphylococcus epidermidis (strain ATCC 12228 / FDA PCI 1200) protein is Exodeoxyribonuclease 7 large subunit.